The chain runs to 341 residues: MGTLPWLLAFFILGLQAWDTPTIVSRKEWGARPLACRALLTLPVAYIITDQLPGMQCQQQSVCSQMLRGLQSHSVYTIGWCDVAYNFLVGDDGRVYEGVGWNIQGLHTQGYNNISLGIAFFGNKIGSSPSPAALSAAEGLISYAIQKGHLSPRYIQPLLLKEETCLDPQHPVMPRKVCPNIIKRSAWEARETHCPKMNLPAKYVIIIHTAGTSCTVSTDCQTVVRNIQSFHMDTRNFCDIGYHFLVGQDGGVYEGVGWHIQGSHTYGFNDIALGIAFIGYFVEKPPNAAALEAAQDLIQCAVVEGYLTPNYLLMGHSDVVNILSPGQALYNIISTWPHFKH.

The N-terminal stretch at 1–17 (MGTLPWLLAFFILGLQA) is a signal peptide. N-acetylmuramoyl-L-alanine amidase domains follow at residues 77–179 (TIGW…KVCP) and 200–325 (PAKY…ILSP). An N-linked (GlcNAc...) asparagine glycan is attached at asparagine 113. Cystine bridges form between cysteine 178-cysteine 300, cysteine 194-cysteine 238, and cysteine 214-cysteine 220. Residues histidine 231, arginine 235, and tyrosine 242 each coordinate peptidoglycan. An interaction with murein region spans residues 264-269 (HTYGFN).

This sequence belongs to the N-acetylmuramoyl-L-alanine amidase 2 family. In terms of assembly, monomer. Homodimer; disulfide-linked. Heterodimer with PGLYRP4; disulfide-linked. N-glycosylated. As to expression, detected in skin epidermis, eccrine sweat glands and ducts, ciliary body epithelial cells of the eye, in small intestine, colon, stomach and in mature epithelial cells of the tongue (at protein level). Highly expressed in skin and esophagus, expressed also in tonsils and thymus and to a much lesser extent in the stomach, descending colon, rectum and brain.

Its subcellular location is the secreted. In terms of biological role, pattern receptor that binds to murein peptidoglycans (PGN) of Gram-positive bacteria. Has bactericidal activity towards Gram-positive bacteria. May kill Gram-positive bacteria by interfering with peptidoglycan biosynthesis. Also binds to Gram-negative bacteria, and has bacteriostatic activity towards Gram-negative bacteria. Plays a role in innate immunity. In Homo sapiens (Human), this protein is Peptidoglycan recognition protein 3 (PGLYRP3).